We begin with the raw amino-acid sequence, 944 residues long: Isoleucine--tRNA ligase (944 aa).

The short motif at 58–68 (PYANGSIHIGH) is the 'HIGH' region element. Glu-563 provides a ligand contact to L-isoleucyl-5'-AMP. The short motif at 604–608 (KMSKS) is the 'KMSKS' region element. Lys-607 serves as a coordination point for ATP. The Zn(2+) site is built by Cys-907, Cys-910, Cys-927, and Cys-930.

The protein belongs to the class-I aminoacyl-tRNA synthetase family. IleS type 1 subfamily. In terms of assembly, monomer. Zn(2+) is required as a cofactor.

It is found in the cytoplasm. It catalyses the reaction tRNA(Ile) + L-isoleucine + ATP = L-isoleucyl-tRNA(Ile) + AMP + diphosphate. Functionally, catalyzes the attachment of isoleucine to tRNA(Ile). As IleRS can inadvertently accommodate and process structurally similar amino acids such as valine, to avoid such errors it has two additional distinct tRNA(Ile)-dependent editing activities. One activity is designated as 'pretransfer' editing and involves the hydrolysis of activated Val-AMP. The other activity is designated 'posttransfer' editing and involves deacylation of mischarged Val-tRNA(Ile). In Salmonella choleraesuis (strain SC-B67), this protein is Isoleucine--tRNA ligase.